The primary structure comprises 322 residues: HPr kinase/phosphorylase (322 aa).

Residues His-146 and Lys-167 contribute to the active site. 161–168 serves as a coordination point for ATP; it reads GDSGLGKS. Ser-168 lines the Mg(2+) pocket. The active-site Proton acceptor; for phosphorylation activity. Proton donor; for dephosphorylation activity is Asp-185. Residues 209–218 form an important for the catalytic mechanism of both phosphorylation and dephosphorylation region; it reads LEVRGLGLLD. Residue Glu-210 participates in Mg(2+) binding. Arg-250 is a catalytic residue. The interval 271-276 is important for the catalytic mechanism of dephosphorylation; that stretch reads QVAAGR.

It belongs to the HPrK/P family. Homohexamer. Mg(2+) serves as cofactor.

The catalysed reaction is [HPr protein]-L-serine + ATP = [HPr protein]-O-phospho-L-serine + ADP + H(+). It carries out the reaction [HPr protein]-O-phospho-L-serine + phosphate + H(+) = [HPr protein]-L-serine + diphosphate. In terms of biological role, catalyzes the ATP- as well as the pyrophosphate-dependent phosphorylation of a specific serine residue in HPr, a phosphocarrier protein of the phosphoenolpyruvate-dependent sugar phosphotransferase system (PTS). HprK/P also catalyzes the pyrophosphate-producing, inorganic phosphate-dependent dephosphorylation (phosphorolysis) of seryl-phosphorylated HPr (P-Ser-HPr). The protein is HPr kinase/phosphorylase of Paraburkholderia phymatum (strain DSM 17167 / CIP 108236 / LMG 21445 / STM815) (Burkholderia phymatum).